A 71-amino-acid polypeptide reads, in one-letter code: Disintegrin ussuristatin-2 (71 aa).

A Disintegrin domain is found at 1–71 (EAGEECDCGA…QSADCPRNGF (71 aa)). 6 cysteine pairs are disulfide-bonded: C6–C21, C8–C16, C15–C38, C29–C35, C34–C59, and C47–C66. A Cell attachment site; atypical (KGD) motif is present at residues 51–53 (KGD).

The protein belongs to the venom metalloproteinase (M12B) family. P-II subfamily. P-IId sub-subfamily. Homodimer. Expressed by the venom gland.

It is found in the secreted. Its function is as follows. Suppress platelet aggregation induced by ADP, collagen, thrombin, and epinephrine (IC(50)=170-330 nM). Also dose-dependently inhibits the adhesion of human melanoma cells to fibrinogen but not to fibronectin. The protein is Disintegrin ussuristatin-2 of Gloydius ussuriensis (Ussuri mamushi).